We begin with the raw amino-acid sequence, 299 residues long: uncharacterized protein (299 aa).

Residues 25–45 traverse the membrane as a helical segment; it reads LLYFFKSLAMILFFIFFSLTS.

Its subcellular location is the membrane. This is an uncharacterized protein from Rickettsia prowazekii (strain Madrid E).